Here is a 348-residue protein sequence, read N- to C-terminus: Neuronal growth regulator 1 (348 aa).

Positions 1-31 are cleaved as a signal peptide; sequence MVLLAQGACCSNQWLAAVLLSLCSCLPAGQS. Ig-like C2-type domains are found at residues 32–128, 133–215, and 219–307; these read VDFP…VHLT, PKIY…RVVV, and PTIQ…LPLN. A disulfide bridge connects residues Cys-54 and Cys-112. Asn-67 and Asn-149 each carry an N-linked (GlcNAc...) asparagine glycan. 2 disulfide bridges follow: Cys-154-Cys-197 and Cys-239-Cys-291. At Tyr-181 the chain carries Phosphotyrosine. Asn-269, Asn-280, Asn-288, and Asn-301 each carry an N-linked (GlcNAc...) asparagine glycan. A lipid anchor (GPI-anchor amidated glycine) is attached at Gly-318. The propeptide at 319–348 is removed in mature form; sequence SACDLFSCWSLALTLSSVISIFYLKNAILQ.

This sequence belongs to the immunoglobulin superfamily. IgLON family. In terms of processing, glycosylated. In terms of tissue distribution, highly expressed in brain.

It localises to the cell membrane. In terms of biological role, may be involved in cell-adhesion. May function as a trans-neural growth-promoting factor in regenerative axon sprouting in the mammalian brain. The chain is Neuronal growth regulator 1 (Negr1) from Rattus norvegicus (Rat).